Here is a 136-residue protein sequence, read N- to C-terminus: MRHKIKGRKLNVTSSHRQAMLANMAVALISHEQIKTTLPKAKELRSYIETLITKAKKADLAVRRSVLSKIKDKKAVEKLINILGTRYKDRPGGYTRIIKAGFRYGDLAPIAYIEFIDRDVNAKGNIKQDVNEDTKN.

Belongs to the bacterial ribosomal protein bL17 family. As to quaternary structure, part of the 50S ribosomal subunit. Contacts protein L32.

The polypeptide is Large ribosomal subunit protein bL17 (Rickettsia canadensis (strain McKiel)).